The primary structure comprises 234 residues: Toxic shock syndrome toxin-1 (234 aa).

The first 40 residues, 1–40 (MNKKLLMNFFIVSPLLLATTATDFTPVPLSSNQIIKTAKA), serve as a signal peptide directing secretion.

Belongs to the staphylococcal/streptococcal toxin family.

It localises to the secreted. In terms of biological role, responsible for the symptoms of toxic shock syndrome. This Staphylococcus aureus protein is Toxic shock syndrome toxin-1 (tst).